Reading from the N-terminus, the 146-residue chain is Large ribosomal subunit protein uL13 (146 aa).

It belongs to the universal ribosomal protein uL13 family. As to quaternary structure, part of the 50S ribosomal subunit.

Its function is as follows. This protein is one of the early assembly proteins of the 50S ribosomal subunit, although it is not seen to bind rRNA by itself. It is important during the early stages of 50S assembly. This chain is Large ribosomal subunit protein uL13, found in Spiroplasma citri.